The sequence spans 299 residues: Spermatocyte protein spe-11 (299 aa).

The segment at methionine 1–glutamate 38 is disordered.

As to expression, expressed in mature sperm.

It is found in the cytoplasm. It localises to the perinuclear region. In terms of biological role, paternally sperm-supplied factor required for embryogenesis. Plays a role in preventing polyspermy possibly by promoting the formation of a continuous and cohesive eggshell chitin layer. The protein is Spermatocyte protein spe-11 (spe-11) of Caenorhabditis elegans.